The primary structure comprises 233 residues: Lysine exporter LysE (233 aa).

The Cytoplasmic portion of the chain corresponds to methionine 1–glutamate 2. Residues isoleucine 3–valine 23 traverse the membrane as a helical segment. The Periplasmic portion of the chain corresponds to leucine 24–proline 65. Residues isoleucine 66 to alanine 86 form a helical membrane-spanning segment. Topologically, residues alanine 87–methionine 143 are cytoplasmic. A helical membrane pass occupies residues leucine 144–isoleucine 164. Residues glycine 165–arginine 176 lie on the Periplasmic side of the membrane. A helical transmembrane segment spans residues tryptophan 177–glycine 197. Over alanine 198–arginine 212 the chain is Cytoplasmic. Residues tryptophan 213–glycine 233 traverse the membrane as a helical segment.

It belongs to the LysE/ArgO transporter (TC 2.A.75) family.

It localises to the cell inner membrane. Its activity is regulated as follows. Transport process is modulated by three forces: the membrane potential, the chemical potential of lysine, and the proton gradient. Strongly inhibited by CCCP and valinomycin. In terms of biological role, catalyzes the efflux of L-lysine. Can also export L-arginine and L-citrulline. The lysEG system prevents bacteriostasis due to elevated L-lysine or L-arginine concentrations that arise during growth in the presence of peptides or in mutants possessing a deregulated biosynthesis pathway. In vitro, can also export D-lysine during biotechnological production of D-amino acids. The chain is Lysine exporter LysE from Corynebacterium glutamicum (strain ATCC 13032 / DSM 20300 / JCM 1318 / BCRC 11384 / CCUG 27702 / LMG 3730 / NBRC 12168 / NCIMB 10025 / NRRL B-2784 / 534).